The following is an 89-amino-acid chain: Small ribosomal subunit protein uS15 (89 aa).

Residues 1-24 (MSLDTTEKQQLINSHQTHATDTGS) are disordered. Polar residues predominate over residues 8 to 24 (KQQLINSHQTHATDTGS).

Belongs to the universal ribosomal protein uS15 family. In terms of assembly, part of the 30S ribosomal subunit. Forms a bridge to the 50S subunit in the 70S ribosome, contacting the 23S rRNA.

In terms of biological role, one of the primary rRNA binding proteins, it binds directly to 16S rRNA where it helps nucleate assembly of the platform of the 30S subunit by binding and bridging several RNA helices of the 16S rRNA. Its function is as follows. Forms an intersubunit bridge (bridge B4) with the 23S rRNA of the 50S subunit in the ribosome. This is Small ribosomal subunit protein uS15 from Synechococcus sp. (strain CC9311).